Here is a 357-residue protein sequence, read N- to C-terminus: Putative electron transport protein YccM (357 aa).

Topologically, residues 1-36 (MAENKRTRWQRRPGTTGGKLPWNDWRNATTWRKATQ) are cytoplasmic. The helical transmembrane segment at 37–54 (LLLLAMNIYIAITFWYWV) threads the bilayer. Over 55–91 (RYYETASSTTFVARPGGIEGWLPIAGLMNLKYSLVTG) the chain is Periplasmic. Residues 92-114 (QLPSVHAAAMLLLVAFIVISLLL) traverse the membrane as a helical segment. Residues 115–158 (KKAFCSWLCPVGTLSELIGDLGNKLFGRQCVLPRWLDIPLRGVK) lie on the Cytoplasmic side of the membrane. A helical transmembrane segment spans residues 159-181 (YLLLSFFIYIALLMPAQAIHYFM). The Periplasmic portion of the chain corresponds to 182–195 (LSPYSVVMDVKMLD). The chain crosses the membrane as a helical span at residues 196 to 218 (FFRHMGTATLISVTVLLIASLFI). Residues 219–309 (RHAWCRYLCP…KPAANKKAFA (91 aa)) are Cytoplasmic-facing. 2 consecutive 4Fe-4S ferredoxin-type domains span residues 242–270 (FKIR…VDKL) and 269–299 (KLIQ…FSLQ). The [4Fe-4S] cluster site is built by C251, C254, C257, C261, C278, C281, C284, and C288. A helical membrane pass occupies residues 310–332 (LSGWLMTLLVLGIMFAVIGYAMY). The Periplasmic segment spans residues 333 to 357 (AGVWQSPVPEELYRRLIPQAPMIGH).

The protein resides in the cell inner membrane. This chain is Putative electron transport protein YccM (yccM), found in Escherichia coli (strain K12).